A 199-amino-acid polypeptide reads, in one-letter code: Transgelin-2 (199 aa).

Position 2 is an N-acetylalanine (Ala2). Ser11 is modified (phosphoserine). Residues Lys17 and Lys20 each carry the N6-acetyllysine modification. In terms of domain architecture, Calponin-homology (CH) spans 24-136 (PDLEQILIQW…RTLMNLGGLA (113 aa)). Ser163 carries the post-translational modification Phosphoserine. Residue Lys171 forms a Glycyl lysine isopeptide (Lys-Gly) (interchain with G-Cter in SUMO2) linkage. Residues 174 to 199 (IGLQMGTNRGASQAGMTGYGMPRQIL) form a Calponin-like repeat. Thr180 bears the Phosphothreonine mark. Omega-N-methylarginine occurs at positions 182 and 196.

Belongs to the calponin family.

The sequence is that of Transgelin-2 (Tagln2) from Rattus norvegicus (Rat).